A 261-amino-acid polypeptide reads, in one-letter code: Mlc titration factor A (261 aa).

His111, His148, His152, and Glu211 together coordinate Zn(2+).

Belongs to the MtfA family. In terms of assembly, interacts with Mlc. Zn(2+) serves as cofactor.

It is found in the cytoplasm. Functionally, involved in the modulation of the activity of the glucose-phosphotransferase system (glucose-PTS). Interacts with the transcriptional repressor Mlc, preventing its interaction with DNA and leading to the modulation of expression of genes regulated by Mlc, including ptsG, which encodes the PTS system glucose-specific EIICB component. Its function is as follows. Shows zinc-dependent metallopeptidase activity. In Edwardsiella ictaluri (strain 93-146), this protein is Mlc titration factor A.